Reading from the N-terminus, the 309-residue chain is NAD kinase 2 (309 aa).

The Proton acceptor role is filled by aspartate 81. NAD(+)-binding positions include 81-82, 155-156, aspartate 185, 196-201, and asparagine 255; these read DG, NE, and TAYALS.

This sequence belongs to the NAD kinase family. The cofactor is a divalent metal cation.

It is found in the cytoplasm. The catalysed reaction is NAD(+) + ATP = ADP + NADP(+) + H(+). In terms of biological role, involved in the regulation of the intracellular balance of NAD and NADP, and is a key enzyme in the biosynthesis of NADP. Catalyzes specifically the phosphorylation on 2'-hydroxyl of the adenosine moiety of NAD to yield NADP. This chain is NAD kinase 2, found in Gloeobacter violaceus (strain ATCC 29082 / PCC 7421).